Consider the following 250-residue polypeptide: Carboxy-S-adenosyl-L-methionine synthase (250 aa).

S-adenosyl-L-methionine is bound by residues tyrosine 45, glycine 70–serine 72, aspartate 95–asparagine 96, aspartate 123–isoleucine 124, asparagine 138, and arginine 205.

This sequence belongs to the class I-like SAM-binding methyltransferase superfamily. Cx-SAM synthase family. In terms of assembly, homodimer.

The enzyme catalyses prephenate + S-adenosyl-L-methionine = carboxy-S-adenosyl-L-methionine + 3-phenylpyruvate + H2O. In terms of biological role, catalyzes the conversion of S-adenosyl-L-methionine (SAM) to carboxy-S-adenosyl-L-methionine (Cx-SAM). The polypeptide is Carboxy-S-adenosyl-L-methionine synthase (Marinobacter nauticus (strain ATCC 700491 / DSM 11845 / VT8) (Marinobacter aquaeolei)).